Consider the following 700-residue polypeptide: Elongation factor G (700 aa).

In terms of domain architecture, tr-type G spans 8-290; the sequence is DRYRNVGIMA…AMIMYMPSPL (283 aa). GTP is bound by residues 17–24, 88–92, and 142–145; these read AHIDAGKT, DTPGH, and NKMD.

It belongs to the TRAFAC class translation factor GTPase superfamily. Classic translation factor GTPase family. EF-G/EF-2 subfamily.

It is found in the cytoplasm. Functionally, catalyzes the GTP-dependent ribosomal translocation step during translation elongation. During this step, the ribosome changes from the pre-translocational (PRE) to the post-translocational (POST) state as the newly formed A-site-bound peptidyl-tRNA and P-site-bound deacylated tRNA move to the P and E sites, respectively. Catalyzes the coordinated movement of the two tRNA molecules, the mRNA and conformational changes in the ribosome. This Vesicomyosocius okutanii subsp. Calyptogena okutanii (strain HA) protein is Elongation factor G.